A 636-amino-acid polypeptide reads, in one-letter code: Basic helix-loop-helix ARNT-like protein 2 (636 aa).

The segment at 25-62 (VSSRVSPGTRPTAMGSFSSHMTEFPRKRKGSDSDPSQS) is disordered. Residues 46-258 (TEFPRKRKGS…SPREKLIDAK (213 aa)) are interaction with PER2. Residues 49–54 (PRKRKG) carry the Nuclear localization signal motif. Positions 107–160 (AFREAHSQTEKRRRDKMNNLIEELSAMIPQCNPMARKLDKLTVLRMAVQHLRSL) constitute a bHLH domain. Residues 177-187 (LQDNELRHLIL) carry the Nuclear export signal 1 motif. The PAS 1 domain occupies 178 to 250 (QDNELRHLIL…EQLSSFDISP (73 aa)). Residue Lys287 forms a Glycyl lysine isopeptide (Lys-Gly) (interchain with G-Cter in SUMO2 and SUMO3) linkage. Lys294 participates in a covalent cross-link: Glycyl lysine isopeptide (Lys-Gly) (interchain with G-Cter in SUMO2). The 71-residue stretch at 357–427 (VPQNSGEINV…DKHKAVLQSK (71 aa)) folds into the PAS 2 domain. The Nuclear export signal 2 motif lies at 392-400 (LGYLPQELL). In terms of domain architecture, PAC spans 432–475 (TDSYKFRAKDGSFVTLKSQWFSFTNPWTKELEYIVSVNTLVLGH).

As to quaternary structure, component of the circadian core oscillator, which includes the CRY proteins, CLOCK, or NPAS2, BMAL1 or BMAL2, CSNK1D and/or CSNK1E, TIMELESS and the PER proteins. Interacts directly with CLOCK to form the BMAL2-CLOCK transactivator. Can form heterodimers or homodimers which interact directly with CLOCK to form the transcription activator. Interacts with NPAS2 and HIF1A. Interacts with PER2. In terms of tissue distribution, expressed in fetal brain. Highly expressed in brain and placenta. Lower levels in heart, liver, thymus, kidney and lung. Located to endothelial cells and neuronal cells of the suprachiasmatic nucleus (SCN). Also detected in endothelial cells of the heart, lung and kidney. In the brain, specifically expressed in the thalamus, hippocampus and amygdala.

It is found in the nucleus. In terms of biological role, transcriptional activator which forms a core component of the circadian clock. The circadian clock, an internal time-keeping system, regulates various physiological processes through the generation of approximately 24 hour circadian rhythms in gene expression, which are translated into rhythms in metabolism and behavior. It is derived from the Latin roots 'circa' (about) and 'diem' (day) and acts as an important regulator of a wide array of physiological functions including metabolism, sleep, body temperature, blood pressure, endocrine, immune, cardiovascular, and renal function. Consists of two major components: the central clock, residing in the suprachiasmatic nucleus (SCN) of the brain, and the peripheral clocks that are present in nearly every tissue and organ system. Both the central and peripheral clocks can be reset by environmental cues, also known as Zeitgebers (German for 'timegivers'). The predominant Zeitgeber for the central clock is light, which is sensed by retina and signals directly to the SCN. The central clock entrains the peripheral clocks through neuronal and hormonal signals, body temperature and feeding-related cues, aligning all clocks with the external light/dark cycle. Circadian rhythms allow an organism to achieve temporal homeostasis with its environment at the molecular level by regulating gene expression to create a peak of protein expression once every 24 hours to control when a particular physiological process is most active with respect to the solar day. Transcription and translation of core clock components (CLOCK, NPAS2, BMAL1, BMAL2, PER1, PER2, PER3, CRY1 and CRY2) plays a critical role in rhythm generation, whereas delays imposed by post-translational modifications (PTMs) are important for determining the period (tau) of the rhythms (tau refers to the period of a rhythm and is the length, in time, of one complete cycle). A diurnal rhythm is synchronized with the day/night cycle, while the ultradian and infradian rhythms have a period shorter and longer than 24 hours, respectively. Disruptions in the circadian rhythms contribute to the pathology of cardiovascular diseases, cancer, metabolic syndromes and aging. A transcription/translation feedback loop (TTFL) forms the core of the molecular circadian clock mechanism. Transcription factors, CLOCK or NPAS2 and BMAL1 or BMAL2, form the positive limb of the feedback loop, act in the form of a heterodimer and activate the transcription of core clock genes and clock-controlled genes (involved in key metabolic processes), harboring E-box elements (5'-CACGTG-3') within their promoters. The core clock genes: PER1/2/3 and CRY1/2 which are transcriptional repressors form the negative limb of the feedback loop and interact with the CLOCK|NPAS2-BMAL1|BMAL2 heterodimer inhibiting its activity and thereby negatively regulating their own expression. This heterodimer also activates nuclear receptors NR1D1/2 and RORA/B/G, which form a second feedback loop and which activate and repress BMAL1 transcription, respectively. The CLOCK-BMAL2 heterodimer activates the transcription of SERPINE1/PAI1 and BHLHE40/DEC1. In Homo sapiens (Human), this protein is Basic helix-loop-helix ARNT-like protein 2.